The primary structure comprises 314 residues: Olfactory receptor 1C1 (314 aa).

The Extracellular portion of the chain corresponds to 1–25 (MEKRNLTVVREFVLLGLPSSAEQQH). The helical transmembrane segment at 26–49 (LLSVLFLCMYLATTLGNMLIIATI) threads the bilayer. Residues 50–57 (GFDSHLHS) lie on the Cytoplasmic side of the membrane. Residues 58–79 (PMYFFLSNLAFVDICFTSTTVP) traverse the membrane as a helical segment. Over 80-100 (QMVVNILTGTKTISFAGCLTQ) the chain is Extracellular. Cys-97 and Cys-189 are disulfide-bonded. Residues 101–120 (LFFFVSFVNMDSLLLCVMAY) traverse the membrane as a helical segment. Over 121-139 (DRYVAICHPLHYTARMNLC) the chain is Cytoplasmic. Residues 140 to 158 (LCVQLVAGLWLVTYLHALL) traverse the membrane as a helical segment. Topologically, residues 159 to 195 (HTVLIAQLSFCASNIIHHFFCDLNPLLQLSCSDVSFN) are extracellular. Residues 196-219 (VMIIFAVGGLLALTPLVCILVSYG) traverse the membrane as a helical segment. At 220 to 236 (LIFSTVLKITSTQGKQR) the chain is on the cytoplasmic side. Residues 237–259 (AVSTCSCHLSVVVLFYGTAIAVY) form a helical membrane-spanning segment. Topologically, residues 260–272 (FSPSSPHMPESDT) are extracellular. The chain crosses the membrane as a helical span at residues 273–292 (LSTIMYSMVAPMLNPFIYTL). At 293-314 (RNRDMKRGLQKMLLKCTVFQQQ) the chain is on the cytoplasmic side.

It belongs to the G-protein coupled receptor 1 family.

It is found in the cell membrane. Its function is as follows. Odorant receptor. The polypeptide is Olfactory receptor 1C1 (OR1C1) (Homo sapiens (Human)).